The following is a 215-amino-acid chain: Ribonuclease T (215 aa).

Residues 20 to 194 (VVIDVETAGF…YDTERTAVLF (175 aa)) form the Exonuclease domain. Mg(2+) contacts are provided by Asp23, Glu25, His181, and Asp186. His181 (proton donor/acceptor) is an active-site residue.

Belongs to the RNase T family. As to quaternary structure, homodimer. The cofactor is Mg(2+).

Its function is as follows. Trims short 3' overhangs of a variety of RNA species, leaving a one or two nucleotide 3' overhang. Responsible for the end-turnover of tRNA: specifically removes the terminal AMP residue from uncharged tRNA (tRNA-C-C-A). Also appears to be involved in tRNA biosynthesis, especially in strains lacking other exoribonucleases. A general regulator of small RNAs (sRNA), contributes to their degradation. Upon overexpression suppresses sRNA-mediated RhyB-silencing of multiple RNA targets; overexpression leads to nearly complete loss of RhyB sRNA. This chain is Ribonuclease T, found in Escherichia coli (strain K12).